Here is a 691-residue protein sequence, read N- to C-terminus: Solute carrier organic anion transporter family member 1B1 (691 aa).

Residues 1-28 (MDQNQHLNKTAEAQPSENKKTRYCNGLK) are Cytoplasmic-facing. A helical transmembrane segment spans residues 29 to 48 (MFLAALSLSFIAKTLGAIIM). Topologically, residues 49–67 (KSSIIHIERRFEISSSLVG) are extracellular. The chain crosses the membrane as a helical span at residues 68–88 (FIDGSFEIGNLLVIVFVSYFG). Topologically, residues 89 to 94 (SKLHRP) are cytoplasmic. A helical transmembrane segment spans residues 95–119 (KLIGIGCFIMGIGGVLTALPHFFMG). The Extracellular portion of the chain corresponds to 120–168 (YYRYSKETNINSSENSTSTLSTCLINQILSLNRASPEIVGKGCLKESGS). N-linked (GlcNAc...) asparagine glycans are attached at residues asparagine 130 and asparagine 134. A helical transmembrane segment spans residues 169 to 197 (YMWIYVFMGNMLRGIGETPIVPLGLSYID). Residues 198–216 (DFAKEGHSSLYLGILNAIA) are Cytoplasmic-facing. The helical transmembrane segment at 217–237 (MIGPIIGFTLGSLFSKMYVDI) threads the bilayer. Residues 238 to 255 (GYVDLSTIRITPTDSRWV) lie on the Extracellular side of the membrane. The helical transmembrane segment at 256–280 (GAWWLNFLVSGLFSIISSIPFFFLP) threads the bilayer. The Cytoplasmic segment spans residues 281 to 331 (QTPNKPQKERKASLSLHVLETNDEKDQTANLTNQGKNITKNVTGFFQSFKS). Phosphoserine is present on residues serine 293 and serine 295. A helical membrane pass occupies residues 332–353 (ILTNPLYVMFVLLTLLQVSSYI). At 354-373 (GAFTYVFKYVEQQYGQPSSK) the chain is on the extracellular side. Residues 374-397 (ANILLGVITIPIFASGMFLGGYII) form a helical membrane-spanning segment. The Cytoplasmic segment spans residues 398–401 (KKFK). A helical membrane pass occupies residues 402 to 425 (LNTVGIAKFSCFTAVMSLSFYLLY). Over 426–537 (FFILCENKSV…DACTRKFYFF (112 aa)) the chain is Extracellular. The N-linked (GlcNAc...) asparagine glycan is linked to asparagine 432. Positions 453–508 (DVPLSYCNSDCNCDESQWEPVCGNNGITYISPCLAGCKSSSGNKKPIVFYNCSCLE) constitute a Kazal-like domain. 3 disulfide bridges follow: cysteine 459–cysteine 489, cysteine 465–cysteine 485, and cysteine 474–cysteine 506. N-linked (GlcNAc...) asparagine glycosylation is found at asparagine 503 and asparagine 516. A helical transmembrane segment spans residues 538-560 (VAIQVLNLFFSALGGTSHVMLIV). The Cytoplasmic segment spans residues 561-569 (KIVQPELKS). Residues 570–595 (LALGFHSMVIRALGGILAPIYFGALI) traverse the membrane as a helical segment. Over 596-629 (DTTCIKWSTNNCGTRGSCRTYNSTSFSRVYLGLS) the chain is Extracellular. N-linked (GlcNAc...) asparagine glycosylation is present at asparagine 617. A helical transmembrane segment spans residues 630 to 647 (SMLRVSSLVLYIILIYAM). Topologically, residues 648-691 (KKKYQEKDINASENGSVMDEANLESLNKNKHFVPSAGADSETHC) are cytoplasmic. Serine 672 and serine 682 each carry phosphoserine.

Belongs to the organo anion transporter (TC 2.A.60) family. Highly expressed in liver, at the basolateral membranes of centrilobular hepatocytes. Expressed in liver (at protein level). Expressed in fetal liver. Not detected in heart, brain, placenta, lung, skeletal muscle, kidney, pancreas, spleen, thymus, prostate, testis, ovary, small intestine, colon and leukocyte. In testis, primarily localized to the basal membrane of Sertoli cells and weakly expressed in Leydig cells and within the tubules.

It localises to the basolateral cell membrane. The protein resides in the basal cell membrane. It catalyses the reaction taurocholate(out) = taurocholate(in). The enzyme catalyses dehydroepiandrosterone 3-sulfate(out) = dehydroepiandrosterone 3-sulfate(in). The catalysed reaction is estrone 3-sulfate(out) = estrone 3-sulfate(in). It carries out the reaction 3,3',5'-triiodo-L-thyronine(out) = 3,3',5'-triiodo-L-thyronine(in). It catalyses the reaction L-thyroxine(out) = L-thyroxine(in). The enzyme catalyses prostaglandin E2(out) = prostaglandin E2(in). The catalysed reaction is thromboxane B2(out) = thromboxane B2(in). It carries out the reaction 17beta-estradiol 17-O-(beta-D-glucuronate)(out) = 17beta-estradiol 17-O-(beta-D-glucuronate)(in). It catalyses the reaction leukotriene C4(out) = leukotriene C4(in). The enzyme catalyses leukotriene E4(out) = leukotriene E4(in). The catalysed reaction is (4E,15E)-bilirubin IXalpha C8-beta-D-glucuronoside(out) = (4E,15E)-bilirubin IXalpha C8-beta-D-glucuronoside(in). It carries out the reaction bilirubin IXalpha bis-beta-D-glucuronoside(out) = bilirubin IXalpha bis-beta-D-glucuronoside(in). Functionally, mediates the Na(+)-independent uptake of organic anions. Shows broad substrate specificity, can transport both organic anions such as bile acid taurocholate (cholyltaurine) and conjugated steroids (dehydroepiandrosterone 3-sulfate, 17-beta-glucuronosyl estradiol, and estrone 3-sulfate), as well as eicosanoids (prostaglandin E2, thromboxane B2, leukotriene C4, and leukotriene E4), and thyroid hormones (T4/L-thyroxine, and T3/3,3',5'-triiodo-L-thyronine). Can take up bilirubin glucuronides from plasma into the liver, contributing to the detoxification-enhancing liver-blood shuttling loop. Involved in the clearance of endogenous and exogenous substrates from the liver. Transports coproporphyrin I and III, by-products of heme synthesis, and may be involved in their hepatic disposition. May contribute to regulate the transport of organic compounds in testes across the blood-testis-barrier. Can transport HMG-CoA reductase inhibitors (also known as statins), such as pravastatin and pitavastatin, a clinically important class of hypolipidemic drugs. May play an important role in plasma and tissue distribution of the structurally diverse chemotherapeutic drug methotrexate. May also transport antihypertension agents, such as the angiotensin-converting enzyme (ACE) inhibitor prodrug enalapril, and the highly selective angiotensin II AT1-receptor antagonist valsartan, in the liver. Shows a pH-sensitive substrate specificity towards prostaglandin E2 and T4 which may be ascribed to the protonation state of the binding site and leads to a stimulation of substrate transport in an acidic microenvironment. Hydrogencarbonate/HCO3(-) acts as the probable counteranion that exchanges for organic anions. In Homo sapiens (Human), this protein is Solute carrier organic anion transporter family member 1B1 (SLCO1B1).